Here is a 72-residue protein sequence, read N- to C-terminus: Guanine nucleotide-binding protein G(I)/G(S)/G(O) subunit gamma-12 (72 aa).

Ser2 bears the N-acetylserine mark. Residues Ser10 and Ser26 each carry the phosphoserine modification. Phosphotyrosine is present on Tyr42. Ser49 carries the post-translational modification Phosphoserine. Position 69 is a cysteine methyl ester (Cys69). Residue Cys69 is the site of S-geranylgeranyl cysteine attachment. A propeptide spans 70–72 (IIL) (removed in mature form).

Belongs to the G protein gamma family. G proteins are composed of 3 units, alpha, beta and gamma.

The protein localises to the cell membrane. Its function is as follows. Guanine nucleotide-binding proteins (G proteins) are involved as a modulator or transducer in various transmembrane signaling systems. The beta and gamma chains are required for the GTPase activity, for replacement of GDP by GTP, and for G protein-effector interaction. The sequence is that of Guanine nucleotide-binding protein G(I)/G(S)/G(O) subunit gamma-12 (Gng12) from Mus musculus (Mouse).